The chain runs to 328 residues: MGAAARLSAPRALVLWAALGAAAHIGPAPDPEDWWSYKDNLQGNFVPGPPFWGLVNAAWSLCAVGKRQSPVDVELKRVLYDPFLPPLRLSTGGEKLRGTLYNTGRHVSFLPAPRPVVNVSGGPLLYSHRLSELRLLFGARDGAGSEHQINHQGFSAEVQLIHFNQELYGNFSAASRGPNGLAILSLFVNVASTSNPFLSRLLNRDTITRISYKNDAYFLQDLSLELLFPESFGFITYQGSLSTPPCSETVTWILIDRALNITSLQMHSLRLLSQNPPSQIFQSLSGNSRPLQPLAHRALRGNRDPRHPERRCRGPNYRLHVDGVPHGR.

The signal sequence occupies residues 1–23; the sequence is MGAAARLSAPRALVLWAALGAAA. One can recognise an Alpha-carbonic anhydrase domain in the interval 33 to 303; sequence DWWSYKDNLQ…LAHRALRGNR (271 aa). 3 N-linked (GlcNAc...) asparagine glycosylation sites follow: Asn118, Asn170, and Asn260. Residues 299–328 form a disordered region; that stretch reads LRGNRDPRHPERRCRGPNYRLHVDGVPHGR. Positions 319 to 328 are enriched in basic and acidic residues; that stretch reads LHVDGVPHGR.

It belongs to the alpha-carbonic anhydrase family. Expressed abundantly in the brain with moderate expression also present in spinal cord and thyroid.

Its subcellular location is the secreted. Its function is as follows. Does not have a catalytic activity. The protein is Carbonic anhydrase-related protein 11 (CA11) of Homo sapiens (Human).